The sequence spans 400 residues: Acetate kinase (400 aa).

Asn9 lines the Mg(2+) pocket. ATP is bound at residue Lys16. Residue Arg90 participates in substrate binding. Asp147 serves as the catalytic Proton donor/acceptor. ATP-binding positions include 207-211 (HIGNG), 282-284 (DLR), and 330-334 (GIGEN). Glu385 is a binding site for Mg(2+).

This sequence belongs to the acetokinase family. As to quaternary structure, homodimer. Mg(2+) is required as a cofactor. The cofactor is Mn(2+).

The protein resides in the cytoplasm. The catalysed reaction is acetate + ATP = acetyl phosphate + ADP. It participates in metabolic intermediate biosynthesis; acetyl-CoA biosynthesis; acetyl-CoA from acetate: step 1/2. Its function is as follows. Catalyzes the formation of acetyl phosphate from acetate and ATP. Can also catalyze the reverse reaction. The sequence is that of Acetate kinase from Staphylococcus aureus (strain JH1).